A 1624-amino-acid chain; its full sequence is Latent-transforming growth factor beta-binding protein 4 (1624 aa).

A signal peptide spans 1–27 (MPRPGTSGRRPLLLVLLLPLFAAATSA). Residues 125 to 146 (RRPRGPGGRGLLRRRPPQRAPA) are disordered. Residues 149–181 (APVLCPLICHNGGVCVKPDRCLCPPDFAGKFCQ) form the EGF-like 1 domain. 6 disulfides stabilise this stretch: Cys153–Cys163, Cys157–Cys169, Cys171–Cys180, Cys289–Cys311, Cys298–Cys324, and Cys312–Cys327. Residues 287–339 (GYCFRELRGGECASPLPGLRTQEVCCRGAGLAWGVHDCQLCSERLGNSERVSA) enclose the TB 1 domain. Residue Asn352 is glycosylated (N-linked (GlcNAc...) asparagine). Residues 357-397 (DVDECATGGRCQHGECANTRGGYTCVCPDGFLLDSSRSSCI) form the EGF-like 2; calcium-binding domain. Disulfide bonds link Cys361–Cys372, Cys367–Cys381, Cys383–Cys396, Cys409–Cys431, Cys418–Cys444, Cys432–Cys447, and Cys433–Cys459. The region spanning 407-459 (GPCFRVLRDGGCSLPILRNITKQICCCSRVGKAWGRGCQLCPPFGSEGFREIC) is the TB 2 domain. A glycan (N-linked (GlcNAc...) asparagine) is linked at Asn425. The tract at residues 474–546 (YNTRPLGQEP…PEIPESGPSS (73 aa)) is disordered. Polar residues predominate over residues 487 to 500 (SLSQPRTLPATSRP). Positions 508 to 522 (HRLEPRPEPRPDPRP) are enriched in basic and acidic residues. In terms of domain architecture, EGF-like 3 spans 545-586 (SSGMCQRNPQVCGPGRCISRPSGYTCACDSGFRLSPQGTRCI). Disulfide bonds link Cys549–Cys561, Cys556–Cys570, Cys572–Cys585, Cys591–Cys603, Cys598–Cys612, Cys614–Cys627, Cys633–Cys645, Cys640–Cys654, Cys656–Cys669, Cys675–Cys687, Cys682–Cys696, Cys698–Cys707, Cys714–Cys726, Cys721–Cys735, Cys737–Cys750, Cys756–Cys768, Cys763–Cys777, Cys779–Cys792, Cys838–Cys851, Cys845–Cys860, Cys862–Cys876, Cys882–Cys894, Cys888–Cys903, Cys905–Cys918, Cys924–Cys935, Cys930–Cys944, Cys946–Cys959, Cys1053–Cys1065, Cys1059–Cys1074, and Cys1076–Cys1089. Residues 587–628 (DVDECRRVPPPCAPGRCENSPGSFRCVCGPGFRAGPRAAECL) form the EGF-like 4; calcium-binding domain. The EGF-like 5; calcium-binding domain occupies 629-670 (DVDECHRVPPPCDLGRCENTPGSFLCVCPAGYQAAPHGASCQ). The EGF-like 6; calcium-binding domain maps to 671–708 (DVDECTQSPGLCGRGACKNLPGSFRCVCPAGFRGSACE). In terms of domain architecture, EGF-like 7; calcium-binding spans 710-751 (DVDECAQEPPPCGPGRCDNTAGSFHCACPAGFRSRGPGAPCQ). Residues 752 to 793 (DVDECARSPPPCTYGRCENTEGSFQCVCPMGFQPNTAGSECE) form the EGF-like 8; calcium-binding domain. The 44-residue stretch at 834–877 (DVDECSSGAPPCGPHGHCTNTEGSFRCSCAPGYRAPSGRPGPCA) folds into the EGF-like 9; calcium-binding domain. Residues 878–919 (DVNECLEGDFCFPHGECLNTDGSFACTCAPGYRPGPRGASCL) enclose the EGF-like 10; calcium-binding domain. Residues 920–960 (DVDECSEEDLCQSGICTNTDGSFECICPPGHRAGPDLASCL) enclose the EGF-like 11; calcium-binding domain. Residues 1049–1090 (DVDECRNRSFCGAHAVCQNLPGSFQCLCDQGYEGARDGRHCV) form the EGF-like 12; calcium-binding domain. The N-linked (GlcNAc...) asparagine glycan is linked to Asn1055. Positions 1130 to 1179 (GRCVPPRTSAGTFPGSQPQAPASPVLPARPPPPPLPRRPSTPRQGPVGSG) are disordered. A compositionally biased stretch (polar residues) spans 1138–1149 (SAGTFPGSQPQA). The span at 1156–1168 (PARPPPPPLPRRP) shows a compositional bias: pro residues. In terms of domain architecture, TB 3 spans 1181–1235 (RECYFDTAAPDACDNILARNVTWQECCCTVGEGWGSGCRIQQCPGTETAEYQSLC). Cystine bridges form between Cys1183–Cys1206, Cys1193–Cys1218, Cys1207–Cys1223, Cys1208–Cys1235, Cys1257–Cys1270, Cys1265–Cys1279, Cys1281–Cys1294, Cys1300–Cys1312, Cys1307–Cys1321, and Cys1323–Cys1336. Asn1200 is a glycosylation site (N-linked (GlcNAc...) asparagine). Residues 1253–1295 (DVDECQLFRDQVCKSGVCVNTAPGYSCYCSNGYYYHTQRLECI) form the EGF-like 13; calcium-binding domain. The EGF-like 14; calcium-binding domain occupies 1296–1337 (DNDECADEEPACEGGRCVNTVGSYHCTCEPPLVLDGSQRRCV). N-linked (GlcNAc...) asparagine glycosylation occurs at Asn1339. One can recognise a TB 4 domain in the interval 1349-1402 (GVCWQEVGADLVCSHPRLDRQATYTECCCLYGEAWGMDCALCPAQDSDDFEALC). 4 disulfides stabilise this stretch: Cys1351/Cys1375, Cys1361/Cys1387, Cys1376/Cys1390, and Cys1377/Cys1402. Over residues 1446–1458 (ALPYDPYPPPPGP) the composition is skewed to pro residues. A disordered region spans residues 1446–1524 (ALPYDPYPPP…PPEGGSYAGS (79 aa)). Residues 1501–1510 (RSRDTRRSFP) are compositionally biased toward basic and acidic residues. EGF-like domains are found at residues 1533 to 1573 (EAEE…MACV) and 1574 to 1618 (DINE…HHCA). Intrachain disulfides connect Cys1537/Cys1548, Cys1543/Cys1557, Cys1559/Cys1572, Cys1578/Cys1593, Cys1588/Cys1602, and Cys1604/Cys1617.

Belongs to the LTBP family. As to quaternary structure, forms part of the large latent transforming growth factor beta precursor complex; removal is essential for activation of complex. Interacts with LTBP1 and TGFB1. Interacts with EFEMP2; this interaction promotes fibrillar deposition of EFEMP2. Contains hydroxylated asparagine residues. As to expression, highly expressed in heart, skeletal muscle, pancreas, uterus, and small intestine. Weakly expressed in placenta and lung.

The protein localises to the secreted. It localises to the extracellular space. It is found in the extracellular matrix. Key regulator of transforming growth factor beta (TGFB1, TGFB2 and TGFB3) that controls TGF-beta activation by maintaining it in a latent state during storage in extracellular space. Associates specifically via disulfide bonds with the Latency-associated peptide (LAP), which is the regulatory chain of TGF-beta, and regulates integrin-dependent activation of TGF-beta. The chain is Latent-transforming growth factor beta-binding protein 4 (LTBP4) from Homo sapiens (Human).